A 572-amino-acid polypeptide reads, in one-letter code: Urease subunit alpha (572 aa).

The Urease domain occupies 132–572 (GGFDSHIHFI…LPMAQRYFMY (441 aa)). Residues His-137, His-139, and Lys-220 each contribute to the Ni(2+) site. Position 220 is an N6-carboxylysine (Lys-220). Position 222 (His-222) interacts with substrate. Residues His-249 and His-275 each contribute to the Ni(2+) site. His-323 acts as the Proton donor in catalysis. Position 363 (Asp-363) interacts with Ni(2+).

The protein belongs to the metallo-dependent hydrolases superfamily. Urease alpha subunit family. As to quaternary structure, heterotrimer of UreA (gamma), UreB (beta) and UreC (alpha) subunits. Three heterotrimers associate to form the active enzyme. It depends on Ni cation as a cofactor. Post-translationally, carboxylation allows a single lysine to coordinate two nickel ions.

The protein resides in the cytoplasm. The enzyme catalyses urea + 2 H2O + H(+) = hydrogencarbonate + 2 NH4(+). The protein operates within nitrogen metabolism; urea degradation; CO(2) and NH(3) from urea (urease route): step 1/1. This chain is Urease subunit alpha, found in Bradyrhizobium diazoefficiens (strain JCM 10833 / BCRC 13528 / IAM 13628 / NBRC 14792 / USDA 110).